The chain runs to 141 residues: Perlwapin-like protein (141 aa).

The signal sequence occupies residues 1–19; it reads MNVYFILFLGVFAFIEVNC. A WAP domain is found at 23–71; that stretch reads KSKSLGTCPKLDVSTVCVVDYKFNCLFQKQCPSGYRCCTYGCNRRCAAV. 6 cysteine pairs are disulfide-bonded: Cys-30–Cys-60, Cys-39–Cys-64, Cys-47–Cys-59, Cys-53–Cys-68, Cys-81–Cys-105, and Cys-92–Cys-104.

As to expression, component of the organic matrix of calcified shell layers like nacre and prisms.

It is found in the secreted. The chain is Perlwapin-like protein from Mytilus galloprovincialis (Mediterranean mussel).